Consider the following 831-residue polypeptide: Periplasmic nitrate reductase (831 aa).

The tat-type signal signal peptide spans Met1 to Ala31. The 4Fe-4S Mo/W bis-MGD-type domain maps to Ile40–Asp96. Positions 47, 50, 54, and 82 each coordinate [4Fe-4S] cluster. Mo-bis(molybdopterin guanine dinucleotide) is bound by residues Lys84, Gln151, Asn176, Cys180, Trp213–Met220, Ser244–His248, Gln263–Asp265, Met373, Gln377, Asn483, Ser509–Asp510, Lys532, Asp559, and Thr719–Thr728. Phe795 provides a ligand contact to substrate. 2 residues coordinate Mo-bis(molybdopterin guanine dinucleotide): Asn803 and Lys820.

The protein belongs to the prokaryotic molybdopterin-containing oxidoreductase family. NasA/NapA/NarB subfamily. As to quaternary structure, component of the periplasmic nitrate reductase NapAB complex composed of NapA and NapB. [4Fe-4S] cluster is required as a cofactor. The cofactor is Mo-bis(molybdopterin guanine dinucleotide). Predicted to be exported by the Tat system. The position of the signal peptide cleavage has not been experimentally proven.

The protein localises to the periplasm. It catalyses the reaction 2 Fe(II)-[cytochrome] + nitrate + 2 H(+) = 2 Fe(III)-[cytochrome] + nitrite + H2O. Functionally, catalytic subunit of the periplasmic nitrate reductase complex NapAB. Receives electrons from NapB and catalyzes the reduction of nitrate to nitrite. In Yersinia enterocolitica serotype O:8 / biotype 1B (strain NCTC 13174 / 8081), this protein is Periplasmic nitrate reductase.